The following is a 214-amino-acid chain: Heat shock 70 kDa protein cognate 1 (214 aa).

Belongs to the heat shock protein 70 family.

The chain is Heat shock 70 kDa protein cognate 1 (Hsc70-1) from Drosophila simulans (Fruit fly).